A 236-amino-acid chain; its full sequence is ATP synthase subunit a (236 aa).

The next 5 membrane-spanning stretches (helical) occupy residues 17 to 37 (WTNL…LFGL), 76 to 96 (SFFV…GLII), 113 to 133 (PVVT…AGVA), 170 to 190 (IFGN…MAFS), and 196 to 216 (MIVS…IGAI).

This sequence belongs to the ATPase A chain family. F-type ATPases have 2 components, CF(1) - the catalytic core - and CF(0) - the membrane proton channel. CF(1) has five subunits: alpha(3), beta(3), gamma(1), delta(1), epsilon(1). CF(0) has three main subunits: a(1), b(2) and c(9-12). The alpha and beta chains form an alternating ring which encloses part of the gamma chain. CF(1) is attached to CF(0) by a central stalk formed by the gamma and epsilon chains, while a peripheral stalk is formed by the delta and b chains.

Its subcellular location is the cell membrane. Key component of the proton channel; it plays a direct role in the translocation of protons across the membrane. The sequence is that of ATP synthase subunit a from Limosilactobacillus fermentum (strain NBRC 3956 / LMG 18251) (Lactobacillus fermentum).